A 439-amino-acid polypeptide reads, in one-letter code: MSGGESRSPDMSRAGDGCLGDGGDDEESDGDGGEVNPASADAESTQKKRKKRNKKKSKKKSKADSPGEQSSPPRIPLDKLFPSGNFPEGEVLEYQATARTTAAERRSNARQHWEDDTFLRNYRKAAEIHRQTRRWVHETAKPGVSLYDIAVGIEDSVRALLDNAGLETGEALKSGMGFPTGLCLNNQVAHYTPNPGQKPVLLQEQDVLTVDFGVHINGWIVDSAFTTAFDPTYDNLLAAVKDATNTGVKTAGIDVRISDVSAAIQEVMESYEVEIRGKTYRVKPIRNLSGHNIHQYRIHGGKSIPFVKNRDQTKMEEGEVFAIETFGSTGRGYIVDDVGVYGYGLNHNAPLNVPVALPSAKRLHKTIRENFGTIVFCRRYLERLNVEKYLAGMNCLVQQGVVEEYGPLMDVKGSYSAQFEHTFLLRGTHKEVFSRGDDY.

A disordered region spans residues 1–87 (MSGGESRSPD…DKLFPSGNFP (87 aa)). A compositionally biased stretch (acidic residues) spans 22–32 (GGDDEESDGDG). Over residues 47-61 (KKRKKRNKKKSKKKS) the composition is skewed to basic residues. His190 is a binding site for substrate. The a divalent metal cation site is built by Asp211, Asp222, and His291. His299 provides a ligand contact to substrate. Positions 324 and 420 each coordinate a divalent metal cation.

This sequence belongs to the peptidase M24A family. Methionine aminopeptidase eukaryotic type 2 subfamily. The cofactor is Co(2+). It depends on Zn(2+) as a cofactor. Mn(2+) is required as a cofactor. Requires Fe(2+) as cofactor.

It localises to the cytoplasm. The enzyme catalyses Release of N-terminal amino acids, preferentially methionine, from peptides and arylamides.. In terms of biological role, cotranslationally removes the N-terminal methionine from nascent proteins. The N-terminal methionine is often cleaved when the second residue in the primary sequence is small and uncharged (Met-Ala-, Cys, Gly, Pro, Ser, Thr, or Val). The protein is Methionine aminopeptidase 2-1 of Chaetomium globosum (strain ATCC 6205 / CBS 148.51 / DSM 1962 / NBRC 6347 / NRRL 1970) (Soil fungus).